Here is a 135-residue protein sequence, read N- to C-terminus: MATFHFDLVSPEKLAFSGEVDQVDIPGVEGDFGVLAGHAPVVAAIRPGMLTVTAGGTQQKIIVLGGLAEVSEKGLTVLADVATSIEELDRAQFADTIAGMEARLTDKEGSELDKAIERLDHFKSIQSQLNTTAMH.

It belongs to the ATPase epsilon chain family. F-type ATPases have 2 components, CF(1) - the catalytic core - and CF(0) - the membrane proton channel. CF(1) has five subunits: alpha(3), beta(3), gamma(1), delta(1), epsilon(1). CF(0) has three main subunits: a, b and c.

Its subcellular location is the cell inner membrane. Its function is as follows. Produces ATP from ADP in the presence of a proton gradient across the membrane. The sequence is that of ATP synthase epsilon chain from Nitrobacter winogradskyi (strain ATCC 25391 / DSM 10237 / CIP 104748 / NCIMB 11846 / Nb-255).